The following is a 246-amino-acid chain: Orotidine 5'-phosphate decarboxylase (246 aa).

Substrate contacts are provided by residues D22, K44, 71–80 (DLKYHDIPHT), T130, R191, Q201, G221, and R222. K73 functions as the Proton donor in the catalytic mechanism.

This sequence belongs to the OMP decarboxylase family. Type 1 subfamily. In terms of assembly, homodimer.

The enzyme catalyses orotidine 5'-phosphate + H(+) = UMP + CO2. The protein operates within pyrimidine metabolism; UMP biosynthesis via de novo pathway; UMP from orotate: step 2/2. In terms of biological role, catalyzes the decarboxylation of orotidine 5'-monophosphate (OMP) to uridine 5'-monophosphate (UMP). This chain is Orotidine 5'-phosphate decarboxylase, found in Neisseria gonorrhoeae (strain ATCC 700825 / FA 1090).